Consider the following 477-residue polypeptide: Ankyrin repeat, SAM and basic leucine zipper domain-containing protein 1 (477 aa).

Residues 1–24 (MATSALRGLAVAGGGESSESEDDG) form a disordered region. Phosphoserine occurs at positions 17, 18, and 20. ANK repeat units lie at residues 46–76 (EKKEKFKKALTTGDVSLVQELLDSGIISVDA), 80–109 (YGWTPLMYAASVANAELVRVLLDRGANASF), 112–146 (DKQTILITACSAHGSEEQILKCVELLLSRNADPNV), 150–179 (RLMTPIMYAARDGHTQVVALLVASGAEVNT), 183–212 (NGYTALTWAARQGHKSIVLKLLELGANKML), and 216–245 (DGKLPSEIAKRNKHHEIFNLLSFTLNPLEG). The region spanning 274 to 336 (SYAEFGDLEV…KILAALKELE (63 aa)) is the SAM domain.

In terms of assembly, interacts with DDX4, PIWIL1, RANBP9 and TDRD1.

The protein localises to the cytoplasm. In terms of biological role, plays a central role during spermatogenesis by repressing transposable elements and preventing their mobilization, which is essential for the germline integrity. Acts via the piRNA metabolic process, which mediates the repression of transposable elements during meiosis by forming complexes composed of piRNAs and Piwi proteins and governs the methylation and subsequent repression of transposons. Its association with pi-bodies suggests a participation in the primary piRNAs metabolic process. Required prior to the pachytene stage to facilitate the production of multiple types of piRNAs, including those associated with repeats involved in the regulation of retrotransposons. May act by mediating protein-protein interactions during germ cell maturation. This Saimiri boliviensis boliviensis (Bolivian squirrel monkey) protein is Ankyrin repeat, SAM and basic leucine zipper domain-containing protein 1 (ASZ1).